Here is a 148-residue protein sequence, read N- to C-terminus: MEFIQKKDIPYFSECEPLVEGLGFKLVDLNVLHKKDVWQVKAVIKSEKGVGIKDCTSVHRTLQPRIEALIGSQDVTMEVSSPGINRLVKRAVEFYAFVGEEAQIWDNSITDWRHGIIKEVNSEGLVLNSDNQDIQIPYQDIKKARCNL.

This sequence belongs to the RimP family.

The protein localises to the cytoplasm. Required for maturation of 30S ribosomal subunits. In Treponema denticola (strain ATCC 35405 / DSM 14222 / CIP 103919 / JCM 8153 / KCTC 15104), this protein is Ribosome maturation factor RimP.